Reading from the N-terminus, the 193-residue chain is Xanthine phosphoribosyltransferase (193 aa).

Residues Leu20 and Thr27 each coordinate xanthine. Residue 128 to 132 (ANGQA) coordinates 5-phospho-alpha-D-ribose 1-diphosphate. Lys156 contacts xanthine.

Belongs to the purine/pyrimidine phosphoribosyltransferase family. Xpt subfamily. As to quaternary structure, homodimer.

It is found in the cytoplasm. It catalyses the reaction XMP + diphosphate = xanthine + 5-phospho-alpha-D-ribose 1-diphosphate. It functions in the pathway purine metabolism; XMP biosynthesis via salvage pathway; XMP from xanthine: step 1/1. Its function is as follows. Converts the preformed base xanthine, a product of nucleic acid breakdown, to xanthosine 5'-monophosphate (XMP), so it can be reused for RNA or DNA synthesis. This chain is Xanthine phosphoribosyltransferase, found in Streptococcus agalactiae serotype Ia (strain ATCC 27591 / A909 / CDC SS700).